The primary structure comprises 306 residues: Tyrosine recombinase XerD (306 aa).

The Core-binding (CB) domain maps to 1–83 (MGFIAQFLEM…TIKSYYEFLI (83 aa)). The 196-residue stretch at 104 to 299 (KLPEILSIAQ…QTNHLKKALL (196 aa)) folds into the Tyr recombinase domain. Active-site residues include arginine 145, lysine 176, histidine 251, arginine 254, and histidine 277. The active-site O-(3'-phospho-DNA)-tyrosine intermediate is tyrosine 286.

It belongs to the 'phage' integrase family. XerD subfamily. Forms a cyclic heterotetrameric complex composed of two molecules of XerC and two molecules of XerD.

The protein localises to the cytoplasm. Functionally, site-specific tyrosine recombinase, which acts by catalyzing the cutting and rejoining of the recombining DNA molecules. The XerC-XerD complex is essential to convert dimers of the bacterial chromosome into monomers to permit their segregation at cell division. It also contributes to the segregational stability of plasmids. The chain is Tyrosine recombinase XerD from Rickettsia conorii (strain ATCC VR-613 / Malish 7).